A 438-amino-acid polypeptide reads, in one-letter code: Trigger factor (438 aa).

The 86-residue stretch at 160 to 245 (DDKVVIDFVG…VKKIQEAQLP (86 aa)) folds into the PPIase FKBP-type domain.

It belongs to the FKBP-type PPIase family. Tig subfamily.

Its subcellular location is the cytoplasm. The catalysed reaction is [protein]-peptidylproline (omega=180) = [protein]-peptidylproline (omega=0). Its function is as follows. Involved in protein export. Acts as a chaperone by maintaining the newly synthesized protein in an open conformation. Functions as a peptidyl-prolyl cis-trans isomerase. This Francisella philomiragia subsp. philomiragia (strain ATCC 25017 / CCUG 19701 / FSC 153 / O#319-036) protein is Trigger factor.